A 493-amino-acid polypeptide reads, in one-letter code: Hexokinase-like 1 protein (493 aa).

Residues 38 to 488 (ASTCPILTKF…SGLGAALLAA (451 aa)) enclose the Hexokinase domain. The segment at 93-232 (SGNEEGLFYA…GLDMRVSALV (140 aa)) is hexokinase small subdomain. Residues glycine 107, threonine 108, and asparagine 109 each contribute to the ADP site. Positions 198, 199, 233, and 234 each coordinate D-glucose. The hexokinase large subdomain stretch occupies residues 233–477 (NDGVGTLAGA…SHVAIKHTKD (245 aa)). Threonine 257 contributes to the ADP binding site. Residues asparagine 260, glutamate 287, and glutamate 317 each coordinate D-glucose. Alanine 442 is a binding site for ADP.

It belongs to the hexokinase family.

The catalysed reaction is a D-hexose + ATP = a D-hexose 6-phosphate + ADP + H(+). It carries out the reaction D-fructose + ATP = D-fructose 6-phosphate + ADP + H(+). The enzyme catalyses D-glucose + ATP = D-glucose 6-phosphate + ADP + H(+). Its pathway is carbohydrate metabolism; hexose metabolism. The protein operates within carbohydrate degradation; glycolysis; D-glyceraldehyde 3-phosphate and glycerone phosphate from D-glucose: step 1/4. In terms of biological role, fructose and glucose phosphorylating enzyme. The protein is Hexokinase-like 1 protein of Arabidopsis thaliana (Mouse-ear cress).